An 832-amino-acid polypeptide reads, in one-letter code: Protein wech (832 aa).

The segment covering 1 to 14 (MMELLSNNSVPQQM) has biased composition (polar residues). The interval 1-42 (MMELLSNNSVPQQMASSNAPSANNVAHSSTANGSGGGSVSSN) is disordered. Residues 15–32 (ASSNAPSANNVAHSSTAN) are compositionally biased toward low complexity. S107 is subject to Phosphoserine. B box-type zinc fingers lie at residues 118–163 (NSSI…IVSL) and 184–224 (SGNF…YASI). The Zn(2+) site is built by C123, C126, C145, H149, C189, H192, C211, and H216. 3 positions are modified to phosphoserine: S470, S475, and S506. NHL repeat units follow at residues 537–580 (SLSF…FNPD), 584–627 (KFKF…FTAS), 631–674 (LLKF…FDSE), 680–722 (QIVF…IDPD), and 727–770 (LSVK…FNQN).

Interacts with the head domain of rhea and the kinase domain of Ilk. Interacts with AGO1. Interacts with mei-P26. Expressed in ovarian germline stem cells (at protein level). Expressed ubiquitously in all epithelial cells during early stages of embryogenesis. Specifically expressed at epidermal muscle attachment site.

Its function is as follows. Vital for larval development. Plays a role in tumor formation. A crucial component for the physical link between integrins and the cytoskeleton in the epidermal muscle attachment sites. In Drosophila melanogaster (Fruit fly), this protein is Protein wech (wech).